Here is a 134-residue protein sequence, read N- to C-terminus: DNA-binding protein H-NS (134 aa).

The DNA-binding element occupies glutamine 111 to alanine 116.

Belongs to the histone-like protein H-NS family. Homodimer that oligomerizes on DNA into higher-order complexes that form bridges between disparate regions of DNA compacting it. Interacts with YmoA and other similar proteins.

The protein localises to the cytoplasm. Its subcellular location is the nucleoid. Its function is as follows. A DNA-binding protein implicated in transcriptional repression and chromosome organization and compaction. Binds nucleation sites in AT-rich DNA and bridges them, forming higher-order nucleoprotein complexes and condensing the chromosome. As many horizontally transferred genes are AT-rich, it plays a central role in silencing foreign genes. A subset of genes are repressed by H-NS in association with other proteins. The sequence is that of DNA-binding protein H-NS (hns) from Proteus vulgaris.